The sequence spans 1605 residues: Zinc finger protein jing homolog (1605 aa).

Positions 1 to 15 (MQHQSLSVRNSSGIS) are enriched in polar residues. Disordered regions lie at residues 1–28 (MQHQ…VRSS), 60–117 (QWPW…QQSN), 359–388 (TRKV…TSDP), 441–468 (QQHQ…TQAQ), 856–877 (STTS…PPKL), 917–947 (TKAT…ASCT), and 991–1213 (NDSG…TDFL). Positions 64–117 (NTSNNTNATNSNNVQSNNNSSTATSNSSTNSNNSPAVNTPTTQNQSQPTTQQSN) are enriched in low complexity. Positions 991-1000 (NDSGIVANSS) are enriched in polar residues. The span at 1021-1030 (PQKKDEESRQ) shows a compositional bias: basic and acidic residues. Residues 1035 to 1049 (SPVPSPSPLSEPPVI) are compositionally biased toward pro residues. 2 stretches are compositionally biased toward acidic residues: residues 1053–1090 (SEPE…DEPH) and 1099–1110 (SSEAVELPELED). Residues 1112-1126 (QPSPPLPCELPPPPT) are compositionally biased toward pro residues. The span at 1135–1149 (LSLPPSQKSPKSLLL) shows a compositional bias: low complexity. Polar residues predominate over residues 1165–1201 (QESMSSDQDYSNQSPLDESSPTGSAEPSESQRSTTPV). A C2H2-type 1 zinc finger spans residues 1260-1285 (GVCYWSNCDAQFDTSSKLLDHLQIQH). The C2H2-type 2; degenerate zinc-finger motif lies at 1293–1320 (FACLWDGCKVHNKESCSRRWLERHVLSH). The C2H2-type 3 zinc finger occupies 1326 to 1350 (HKCIVAGCGMRFGSQLALEKHVNHH). 2 disordered regions span residues 1352–1371 (NNTD…LPKV) and 1511–1605 (CSRS…SSTS). Low complexity-rich tracts occupy residues 1511–1537 (CSRS…SLIS) and 1556–1605 (KQSY…SSTS).

This sequence belongs to the AEBP2/jing C2H2-type zinc-finger family.

The protein localises to the nucleus. Functionally, may functionally interact with Polycomb group (PcG) and trithorax group (trxG) proteins to repress transcription. The chain is Zinc finger protein jing homolog from Aedes aegypti (Yellowfever mosquito).